The chain runs to 574 residues: Proline--tRNA ligase (574 aa).

The protein belongs to the class-II aminoacyl-tRNA synthetase family. ProS type 1 subfamily. In terms of assembly, homodimer.

Its subcellular location is the cytoplasm. The catalysed reaction is tRNA(Pro) + L-proline + ATP = L-prolyl-tRNA(Pro) + AMP + diphosphate. Functionally, catalyzes the attachment of proline to tRNA(Pro) in a two-step reaction: proline is first activated by ATP to form Pro-AMP and then transferred to the acceptor end of tRNA(Pro). As ProRS can inadvertently accommodate and process non-cognate amino acids such as alanine and cysteine, to avoid such errors it has two additional distinct editing activities against alanine. One activity is designated as 'pretransfer' editing and involves the tRNA(Pro)-independent hydrolysis of activated Ala-AMP. The other activity is designated 'posttransfer' editing and involves deacylation of mischarged Ala-tRNA(Pro). The misacylated Cys-tRNA(Pro) is not edited by ProRS. The polypeptide is Proline--tRNA ligase (Nautilia profundicola (strain ATCC BAA-1463 / DSM 18972 / AmH)).